We begin with the raw amino-acid sequence, 389 residues long: Chaperone protein DnaJ (389 aa).

A J domain is found at 6–70 (DYYEVLGLAK…QKKAAYDQYG (65 aa)). A CR-type zinc finger spans residues 142-224 (GVEKEIKYNR…CHGTGHEKKA (83 aa)). Residues Cys-155, Cys-158, Cys-172, Cys-175, Cys-198, Cys-201, Cys-212, and Cys-215 each contribute to the Zn(2+) site. CXXCXGXG motif repeat units lie at residues 155–162 (CATCGGNG), 172–179 (CHKCHGSG), 198–205 (CDVCHGTG), and 212–219 (CPTCHGTG).

Belongs to the DnaJ family. In terms of assembly, homodimer. Zn(2+) is required as a cofactor.

The protein localises to the cytoplasm. Its function is as follows. Participates actively in the response to hyperosmotic and heat shock by preventing the aggregation of stress-denatured proteins and by disaggregating proteins, also in an autonomous, DnaK-independent fashion. Unfolded proteins bind initially to DnaJ; upon interaction with the DnaJ-bound protein, DnaK hydrolyzes its bound ATP, resulting in the formation of a stable complex. GrpE releases ADP from DnaK; ATP binding to DnaK triggers the release of the substrate protein, thus completing the reaction cycle. Several rounds of ATP-dependent interactions between DnaJ, DnaK and GrpE are required for fully efficient folding. Also involved, together with DnaK and GrpE, in the DNA replication of plasmids through activation of initiation proteins. This chain is Chaperone protein DnaJ, found in Enterococcus faecalis (strain ATCC 700802 / V583).